Consider the following 570-residue polypeptide: Enhancer of polycomb-like protein 1 (570 aa).

Positions 541–570 (ALNNLNSGQTSGQTMGSNPGPGAIAPTPET) are disordered. The segment covering 543 to 557 (NNLNSGQTSGQTMGS) has biased composition (polar residues).

The protein belongs to the enhancer of polycomb family. In terms of assembly, component of the NuA4 histone acetyltransferase complex.

The protein resides in the nucleus. In terms of biological role, component of the NuA4 histone acetyltransferase complex which is involved in transcriptional activation of selected genes principally by acetylation of nucleosomal histone H4 and H2A. The NuA4 complex is also involved in DNA repair. Involved in gene silencing by neighboring heterochromatin, blockage of the silencing spreading along the chromosome, and required for cell cycle progression through G2/M. In Emericella nidulans (strain FGSC A4 / ATCC 38163 / CBS 112.46 / NRRL 194 / M139) (Aspergillus nidulans), this protein is Enhancer of polycomb-like protein 1 (epl1).